Here is a 201-residue protein sequence, read N- to C-terminus: Pyrrolidone-carboxylate peptidase (201 aa).

Residues E81, C143, and H168 contribute to the active site.

The protein belongs to the peptidase C15 family. Homotetramer.

It localises to the cytoplasm. The catalysed reaction is Release of an N-terminal pyroglutamyl group from a polypeptide, the second amino acid generally not being Pro.. Its function is as follows. Removes 5-oxoproline from various penultimate amino acid residues except L-proline. The chain is Pyrrolidone-carboxylate peptidase (pcp) from Halalkalibacterium halodurans (strain ATCC BAA-125 / DSM 18197 / FERM 7344 / JCM 9153 / C-125) (Bacillus halodurans).